Here is an 837-residue protein sequence, read N- to C-terminus: Tuftelin-interacting protein 11 (837 aa).

2 stretches are compositionally biased toward basic and acidic residues: residues 1 to 13 and 50 to 64; these read MSLSHLYRDGEGR and TYGVWAEHDSDDERP. 2 disordered regions span residues 1 to 21 and 50 to 136; these read MSLSHLYRDGEGRVDDDDDER and TYGV…AGGT. A required for interaction with DHX15 region spans residues 1–50; the sequence is MSLSHLYRDGEGRVDDDDDERENFEITDWDLQNEFNPNRQRHWQTKEEAT. 3 positions are modified to phosphoserine: Ser-2, Ser-59, and Ser-98. Residues 91–102 show a composition bias toward acidic residues; the sequence is EEAELDDSEDEE. A compositionally biased stretch (basic and acidic residues) spans 103-116; the sequence is KPGKQEELPKDLGP. Position 144 is a phosphoserine (Ser-144). The region spanning 149–195 is the G-patch domain; sequence TKGIGQKLLQKMGYVPGRGLGKNAQGIINPIEAKQRKGKGAVGAYGS. The segment at 183–236 is disordered; it reads QRKGKGAVGAYGSERTTQSLQDFPVVDSEEEAEEEFQKELSQWRKDPSGSKKKP. Ser-210 bears the Phosphoserine mark. The segment covering 217–231 has biased composition (basic and acidic residues); the sequence is EFQKELSQWRKDPSG. The short motif at 700–705 is the Nuclear localization signal element; it reads VKDKFN. The interval 710 to 734 is required for nuclear speckle localization; it reads IMNRAVSSNVGAYMQPGARENIAYL.

This sequence belongs to the TFP11/STIP family. As to quaternary structure, identified in the spliceosome C complex. Found in the Intron Large (IL) complex, a post-mRNA release spliceosomal complex containing the excised intron, U2, U5 and U6 snRNPs, and splicing factors. Interacts with TUFT1. Interacts with DHX15; indicative for a recruitment of DHX15 to the IL complex. Interacts with GCFC2.

It is found in the cytoplasm. The protein resides in the nucleus. Its function is as follows. Involved in pre-mRNA splicing, specifically in spliceosome disassembly during late-stage splicing events. Intron turnover seems to proceed through reactions in two lariat-intron associated complexes termed Intron Large (IL) and Intron Small (IS). In cooperation with DHX15 seems to mediate the transition of the U2, U5 and U6 snRNP-containing IL complex to the snRNP-free IS complex leading to efficient debranching and turnover of excised introns. May play a role in the differentiation of ameloblasts and odontoblasts or in the forming of the enamel extracellular matrix. The sequence is that of Tuftelin-interacting protein 11 (TFIP11) from Oryctolagus cuniculus (Rabbit).